Reading from the N-terminus, the 279-residue chain is Tryptophan 2,3-dioxygenase (279 aa).

Substrate-binding positions include 48-52, Tyr110, and Arg114; that span reads FIVIH. Heme is bound at residue His237. Thr251 lines the substrate pocket.

The protein belongs to the tryptophan 2,3-dioxygenase family. Homotetramer. Heme is required as a cofactor.

The catalysed reaction is L-tryptophan + O2 = N-formyl-L-kynurenine. It functions in the pathway amino-acid degradation; L-tryptophan degradation via kynurenine pathway; L-kynurenine from L-tryptophan: step 1/2. In terms of biological role, heme-dependent dioxygenase that catalyzes the oxidative cleavage of the L-tryptophan (L-Trp) pyrrole ring and converts L-tryptophan to N-formyl-L-kynurenine. Catalyzes the oxidative cleavage of the indole moiety. This is Tryptophan 2,3-dioxygenase from Exiguobacterium sibiricum (strain DSM 17290 / CCUG 55495 / CIP 109462 / JCM 13490 / 255-15).